Consider the following 239-residue polypeptide: Cytochrome b6-f complex iron-sulfur subunit 1, cyanelle (239 aa).

A cyanelle-targeting transit peptide spans 1-60 (MAFTTTAVVAPRGAKITGQSSTCAIQNGKTVAVGTSKQVGSFKPVFAAAKPAKETTFSVS). The chain crosses the membrane as a helical span at residues 81-101 (LLGAIAGPVAGAGGPFVSFLV). Residues 125–221 (VSSWLETHKP…VSVLEDGVVA (97 aa)) form the Rieske domain. [2Fe-2S] cluster is bound by residues C167, H169, C185, and H188. A disulfide bond links C172 and C187.

The protein belongs to the Rieske iron-sulfur protein family. The 4 large subunits of the cytochrome b6-f complex are cytochrome b6, subunit IV (17 kDa polypeptide, petD), cytochrome f and the Rieske protein, while the 4 small subunits are petG, petL, petM and petN. The complex functions as a dimer. [2Fe-2S] cluster serves as cofactor.

The protein localises to the plastid. It localises to the cyanelle thylakoid membrane. It carries out the reaction 2 oxidized [plastocyanin] + a plastoquinol + 2 H(+)(in) = 2 reduced [plastocyanin] + a plastoquinone + 4 H(+)(out). In terms of biological role, component of the cytochrome b6-f complex, which mediates electron transfer between photosystem II (PSII) and photosystem I (PSI), cyclic electron flow around PSI, and state transitions. This is Cytochrome b6-f complex iron-sulfur subunit 1, cyanelle (petC-1) from Cyanophora paradoxa.